The sequence spans 317 residues: MSRSALVGNITAMLEDAGFTVSDRCAIRPKSFDIAARRGDDVLLLKVLANIDAFDGYTGTEMRRLGEYLDATPLVIGLRTRDEELKPGVVYFRHGVPVFSPDTAMDLFIEEVPPLIYAAPGGLYVNIDGDLLSDIRSQEDMSLGKLANELGVSRRTVSKYEDGMSASVEVAAELEEIFDRKLASPVEVLSGAEEVRDDVDEPEAPEADPDDAEIVTVLTRVGFEVHPTMQAPFKAVSEDEKRERKVLTGHSEFNRTAEKRARIMSSVGHVTRTRSVYVVDSTKRDSVDGTALIEREEFERIHDSDELENLIRERAEG.

Positions 132-189 (LSDIRSQEDMSLGKLANELGVSRRTVSKYEDGMSASVEVAAELEEIFDRKLASPVEVL) constitute an HTH cro/C1-type domain. Positions 143–162 (LGKLANELGVSRRTVSKYED) form a DNA-binding region, H-T-H motif.

The polypeptide is Putative HTH-type transcriptional regulatory protein NP_1320A (Natronomonas pharaonis (strain ATCC 35678 / DSM 2160 / CIP 103997 / JCM 8858 / NBRC 14720 / NCIMB 2260 / Gabara) (Halobacterium pharaonis)).